Here is a 394-residue protein sequence, read N- to C-terminus: Elongation factor Tu (394 aa).

A tr-type G domain is found at 10–204 (KPHVNIGTIG…AVDSYIPQPV (195 aa)). The G1 stretch occupies residues 19-26 (GHVDHGKT). 19 to 26 (GHVDHGKT) contributes to the GTP binding site. A Mg(2+)-binding site is contributed by Thr-26. A G2 region spans residues 60-64 (GITIS). The G3 stretch occupies residues 81-84 (DCPG). GTP contacts are provided by residues 81–85 (DCPGH) and 136–139 (NKID). The tract at residues 136–139 (NKID) is G4. The G5 stretch occupies residues 174 to 176 (SAL).

It belongs to the TRAFAC class translation factor GTPase superfamily. Classic translation factor GTPase family. EF-Tu/EF-1A subfamily. As to quaternary structure, monomer.

The protein localises to the cytoplasm. The catalysed reaction is GTP + H2O = GDP + phosphate + H(+). Functionally, GTP hydrolase that promotes the GTP-dependent binding of aminoacyl-tRNA to the A-site of ribosomes during protein biosynthesis. The chain is Elongation factor Tu from Rickettsia conorii (strain ATCC VR-613 / Malish 7).